A 104-amino-acid polypeptide reads, in one-letter code: Large ribosomal subunit protein uL24 (104 aa).

It belongs to the universal ribosomal protein uL24 family. Part of the 50S ribosomal subunit.

In terms of biological role, one of two assembly initiator proteins, it binds directly to the 5'-end of the 23S rRNA, where it nucleates assembly of the 50S subunit. Functionally, one of the proteins that surrounds the polypeptide exit tunnel on the outside of the subunit. The sequence is that of Large ribosomal subunit protein uL24 from Bartonella tribocorum (strain CIP 105476 / IBS 506).